Consider the following 805-residue polypeptide: Zinc finger CCCH domain-containing protein 11B (805 aa).

2 consecutive C3H1-type zinc fingers follow at residues 2–29 (PNQG…HCEA) and 31–57 (LGNE…HMEI). Disordered regions lie at residues 140–194 (KVES…GLRV), 223–351 (KKMK…DKVN), 364–433 (MLLE…TCIK), 449–468 (IVAS…SMQE), 481–506 (KALR…PGAR), and 715–805 (VTVP…PLEL). Residues 160-175 (ADDDEDDDDQFSEEGD) are compositionally biased toward acidic residues. Over residues 364 to 390 (MLLERASQKHGESQTKLKTEGPSKTDD) the composition is skewed to basic and acidic residues. Over residues 391-402 (STSGARSSSTIR) the composition is skewed to polar residues. A coiled-coil region spans residues 403–423 (IKTFSEVLAEEEHRQQEAERQ). 2 stretches are compositionally biased toward basic and acidic residues: residues 412-433 (EEEH…TCIK) and 455-468 (QSEE…SMQE). Composition is skewed to low complexity over residues 486 to 498 (QQSS…SPSQ) and 730 to 749 (PPTQ…PSSS). Positions 750 to 763 (QMSMKTRRLSSAST) are enriched in polar residues. Residues 789 to 805 (EIDLDPGKDEDDLPLEL) are compositionally biased toward acidic residues.

In terms of biological role, may play a role in mRNA transport. This is Zinc finger CCCH domain-containing protein 11B from Homo sapiens (Human).